Consider the following 235-residue polypeptide: Large ribosomal subunit protein uL1 (235 aa).

Belongs to the universal ribosomal protein uL1 family. As to quaternary structure, part of the 50S ribosomal subunit.

In terms of biological role, binds directly to 23S rRNA. The L1 stalk is quite mobile in the ribosome, and is involved in E site tRNA release. Functionally, protein L1 is also a translational repressor protein, it controls the translation of the L11 operon by binding to its mRNA. In Fusobacterium nucleatum subsp. nucleatum (strain ATCC 25586 / DSM 15643 / BCRC 10681 / CIP 101130 / JCM 8532 / KCTC 2640 / LMG 13131 / VPI 4355), this protein is Large ribosomal subunit protein uL1.